The following is a 149-amino-acid chain: Transcriptional repressor NrdR (149 aa).

The segment at 3-34 is a zinc-finger region; sequence CPFCSEQETKVIDSRLVAEGQQVRRRRECMVC. One can recognise an ATP-cone domain in the interval 49–139; the sequence is PRVIKRDGSR…VYRSFEDIRE (91 aa).

This sequence belongs to the NrdR family. The cofactor is Zn(2+).

Negatively regulates transcription of bacterial ribonucleotide reductase nrd genes and operons by binding to NrdR-boxes. This chain is Transcriptional repressor NrdR, found in Alteromonas mediterranea (strain DSM 17117 / CIP 110805 / LMG 28347 / Deep ecotype).